The primary structure comprises 157 residues: 3-hydroxyacyl-[acyl-carrier-protein] dehydratase FabZ (157 aa).

Histidine 58 is a catalytic residue.

Belongs to the thioester dehydratase family. FabZ subfamily.

It is found in the cytoplasm. The catalysed reaction is a (3R)-hydroxyacyl-[ACP] = a (2E)-enoyl-[ACP] + H2O. In terms of biological role, involved in unsaturated fatty acids biosynthesis. Catalyzes the dehydration of short chain beta-hydroxyacyl-ACPs and long chain saturated and unsaturated beta-hydroxyacyl-ACPs. This chain is 3-hydroxyacyl-[acyl-carrier-protein] dehydratase FabZ, found in Brucella abortus biovar 1 (strain 9-941).